The primary structure comprises 185 residues: Ribosome-recycling factor (185 aa).

This sequence belongs to the RRF family.

The protein resides in the cytoplasm. Its function is as follows. Responsible for the release of ribosomes from messenger RNA at the termination of protein biosynthesis. May increase the efficiency of translation by recycling ribosomes from one round of translation to another. In Chloroflexus aggregans (strain MD-66 / DSM 9485), this protein is Ribosome-recycling factor.